The primary structure comprises 133 residues: Transmembrane protein 60 (133 aa).

A run of 4 helical transmembrane segments spans residues 5-25 (LAQRVLLTWLFTLLFLIMLVL), 35-55 (WFLIFIPVWIFDTILLVLLIV), 78-98 (AWYLIAMLLKLAFCLALCAKL), and 110-130 (FIPLWALLAGALTELGYNVFF).

Its subcellular location is the membrane. This Homo sapiens (Human) protein is Transmembrane protein 60 (TMEM60).